We begin with the raw amino-acid sequence, 445 residues long: Glycerophosphocholine choline phosphodiesterase ENPP6 (445 aa).

Positions M1–A22 are cleaved as a signal peptide. Positions 32, 71, and 92 each coordinate substrate. Zn(2+)-binding residues include D32 and S71. The active-site Nucleophile is the S71. S71 is modified (phosphoserine). N-linked (GlcNAc...) asparagine glycans are attached at residues N100 and N118. C142 and C154 form a disulfide bridge. D193 contributes to the substrate binding site. Residues D193, H197, D240, and H241 each coordinate Zn(2+). H241 contacts substrate. A glycan (N-linked (GlcNAc...) asparagine) is linked at N341. H356 is a substrate binding site. Residue H356 participates in Zn(2+) binding. Residue N406 is glycosylated (N-linked (GlcNAc...) asparagine). Residue S421 is the site of GPI-anchor amidated serine attachment. A propeptide spans S422–A445 (removed in mature form).

Belongs to the nucleotide pyrophosphatase/phosphodiesterase family. Homodimer; disulfide-linked. Homotetramer. Zn(2+) serves as cofactor.

The protein localises to the cell membrane. It carries out the reaction sn-glycerol 3-phosphocholine + H2O = phosphocholine + glycerol + H(+). The enzyme catalyses a 1-acyl-sn-glycero-3-phosphocholine + H2O = a 1-acyl-sn-glycerol + phosphocholine + H(+). The catalysed reaction is a 1-O-alkyl-sn-glycero-3-phosphocholine + H2O = a 1-O-alkyl-sn-glycerol + phosphocholine + H(+). It catalyses the reaction 1-dodecanoyl-sn-glycero-3-phosphocholine + H2O = 1-dodecanoyl-sn-glycerol + phosphocholine + H(+). It carries out the reaction 1-hexadecanoyl-sn-glycero-3-phosphocholine + H2O = 1-hexadecanoyl-sn-glycerol + phosphocholine + H(+). The enzyme catalyses 1-(5Z,8Z,11Z,14Z-eicosatetraenoyl)-sn-glycero-3-phosphocholine + H2O = 1-(5Z,8Z,11Z,14Z-eicosatetraenoyl)-sn-glycerol + phosphocholine + H(+). The catalysed reaction is 1-tetradecanoyl-sn-glycero-3-phosphocholine + H2O = 1-tetradecanoyl-sn-glycerol + phosphocholine + H(+). It catalyses the reaction sphing-4-enine-phosphocholine + H2O = sphing-4-enine + phosphocholine + H(+). It carries out the reaction 1-(9Z-octadecenoyl)-sn-glycero-3-phosphocholine + H2O = 1-(9Z-octadecenoyl)-sn-glycerol + phosphocholine + H(+). The enzyme catalyses 1-(9Z,12Z)-octadecadienoyl-sn-glycero-3-phosphocholine + H2O = 1-(9Z,12Z-octadecadienoyl)-sn-glycerol + phosphocholine + H(+). The catalysed reaction is glycero-2-phosphocholine + H2O = phosphocholine + glycerol + H(+). Inhibited by EDTA and EGTA in vitro. Choline-specific glycerophosphodiesterase that hydrolyzes glycerophosphocholine (GPC) and lysophosphatidylcholine (LPC) and contributes to supplying choline to the cells. Has a preference for LPC with short (12:0 and 14:0) or polyunsaturated (18:2 and 20:4) fatty acids. In vitro, hydrolyzes only choline-containing lysophospholipids, such as sphingosylphosphorylcholine (SPC), platelet-activating factor (PAF) and lysoPAF, but not other lysophospholipids. This Bos taurus (Bovine) protein is Glycerophosphocholine choline phosphodiesterase ENPP6.